A 492-amino-acid polypeptide reads, in one-letter code: Solute carrier family 2, facilitated glucose transporter member 1 (492 aa).

M1 carries the N-acetylmethionine modification. Topologically, residues 1-11 (MEPSSKKVTGR) are cytoplasmic. The chain crosses the membrane as a helical span at residues 12-33 (LMLAVGGAVLGSLQFGYNTGVI). Topologically, residues 34–66 (NAPQKVIEEFYNQTWNHRYGESIPSTTLTTLWS) are extracellular. A glycan (N-linked (GlcNAc...) asparagine) is linked at N45. The helical transmembrane segment at 67–87 (LSVAIFSVGGMIGSFSVGLFV) threads the bilayer. Over 88-90 (NRF) the chain is Cytoplasmic. A helical membrane pass occupies residues 91–112 (GRRNSMLMMNLLAFVSAVLMGF). At 113–120 (SKLGKSFE) the chain is on the extracellular side. Residues 121 to 144 (MLILGRFIIGVYCGLTTGFVPMYV) form a helical membrane-spanning segment. The Cytoplasmic segment spans residues 145–155 (GEVSPTALRGA). The helical transmembrane segment at 156-176 (LGTLHQLGIVVGILIAQVFGL) threads the bilayer. Q161 contributes to the D-glucose binding site. The Extracellular segment spans residues 177–185 (DSIMGNADL). The chain crosses the membrane as a helical span at residues 186 to 206 (WPLLLSVIFIPALLQCILLPF). The Cytoplasmic portion of the chain corresponds to 207–271 (CPESPRFLLI…LFRSPAYRQP (65 aa)). S226 carries the phosphoserine modification. A helical transmembrane segment spans residues 272-293 (ILIAVVLQLSQQLSGINAVFYY). D-glucose is bound by residues 282–283 (QQ) and N288. The Extracellular segment spans residues 294 to 306 (STSIFEKAGVQQP). Residues 307–328 (VYATIGSGIVNTAFTVVSLFVV) form a helical membrane-spanning segment. Position 317 (N317) interacts with D-glucose. Residues 329-334 (ERAGRR) are Cytoplasmic-facing. A helical transmembrane segment spans residues 335–355 (TLHLIGLAGMAGCAVLMTIAL). The Extracellular segment spans residues 356–365 (ALLEQLPWMS). Residues 366-388 (YLSIVAIFGFVAFFEVGPGPIPW) traverse the membrane as a helical segment. 2 residues coordinate D-glucose: E380 and W388. Residues 389–401 (FIVAELFSQGPRP) lie on the Cytoplasmic side of the membrane. Residues 402-422 (AAVAVAGFSNWTSNFIVGMCF) form a helical membrane-spanning segment. Over 423 to 429 (QYVEQLC) the chain is Extracellular. The chain crosses the membrane as a helical span at residues 430 to 450 (GPYVFIIFTVLLVLFFIFTYF). At 451–492 (KVPETKGRTFDEIASGFRQGGASQSDKTPEELFHPLGADSQV) the chain is on the cytoplasmic side. S465 bears the Phosphoserine mark. A disordered region spans residues 468 to 492 (RQGGASQSDKTPEELFHPLGADSQV). At T478 the chain carries Phosphothreonine. S490 bears the Phosphoserine mark.

The protein belongs to the major facilitator superfamily. Sugar transporter (TC 2.A.1.1) family. Glucose transporter subfamily. As to quaternary structure, found in a complex with ADD2, DMTN and SLC2A1. Interacts (via C-terminus cytoplasmic region) with DMTN. Interacts with SNX27; the interaction is required when endocytosed to prevent degradation in lysosomes and promote recycling to the plasma membrane. Interacts with STOM. Interacts with GIPC (via PDZ domain). Interacts with SGTA (via Gln-rich region). Interacts with isoform 1 of BSG. Interacts with SMIM43; the interaction may promote SLC2A1-mediated glucose transport to meet the energy needs of mesendoderm differentiation. Phosphorylation at Ser-226 by PKC promotes glucose uptake by increasing cell membrane localization. As to expression, detected in osteoblastic cells (at protein level). Detected in brain, and at lower levels in kidney, heart and lung.

The protein localises to the cell membrane. Its subcellular location is the photoreceptor inner segment. It catalyses the reaction D-glucose(out) = D-glucose(in). With respect to regulation, the uptake of glucose is inhibited by cytochalasin B. Glucose uptake is increased in response to phorbol ester 12-O-tetradecanoylphorbol-13-acetate (TPA) treatment: TPA-induced glucose uptake requires phosphorylation at Ser-226. In terms of biological role, facilitative glucose transporter, which is responsible for constitutive or basal glucose uptake. Has a very broad substrate specificity; can transport a wide range of aldoses including both pentoses and hexoses. Most important energy carrier of the brain: present at the blood-brain barrier and assures the energy-independent, facilitative transport of glucose into the brain. In association with BSG and NXNL1, promotes retinal cone survival by increasing glucose uptake into photoreceptors. Required for mesendoderm differentiation. This is Solute carrier family 2, facilitated glucose transporter member 1 from Rattus norvegicus (Rat).